The primary structure comprises 142 residues: Hemoglobin subunit alpha (142 aa).

The Globin domain occupies 2-142; the sequence is VLSADDKANI…VSTVLTSKYR (141 aa). Residue serine 4 is modified to Phosphoserine. N6-succinyllysine occurs at positions 8 and 12. Residue lysine 17 is modified to N6-acetyllysine; alternate. At lysine 17 the chain carries N6-succinyllysine; alternate. Tyrosine 25 bears the Phosphotyrosine mark. A Phosphoserine modification is found at serine 36. At lysine 41 the chain carries N6-succinyllysine. Serine 50 bears the Phosphoserine mark. Histidine 59 serves as a coordination point for O2. Histidine 88 is a binding site for heme b. Threonine 109 carries the post-translational modification Phosphothreonine. A phosphoserine mark is found at serine 125 and serine 132. Phosphothreonine is present on residues threonine 135 and threonine 138. Phosphoserine is present on serine 139.

The protein belongs to the globin family. Heterotetramer of two alpha chains and two beta chains. Red blood cells.

Its function is as follows. Involved in oxygen transport from the lung to the various peripheral tissues. Hemopressin acts as an antagonist peptide of the cannabinoid receptor CNR1. Hemopressin-binding efficiently blocks cannabinoid receptor CNR1 and subsequent signaling. This Cricetomys gambianus (Northern giant pouched rat) protein is Hemoglobin subunit alpha (HBA).